The primary structure comprises 250 residues: 23S rRNA (guanosine-2'-O-)-methyltransferase RlmB (250 aa).

Residues Gly198, Leu218, and Leu227 each coordinate S-adenosyl-L-methionine.

It belongs to the class IV-like SAM-binding methyltransferase superfamily. RNA methyltransferase TrmH family. RlmB subfamily.

The protein localises to the cytoplasm. It carries out the reaction guanosine(2251) in 23S rRNA + S-adenosyl-L-methionine = 2'-O-methylguanosine(2251) in 23S rRNA + S-adenosyl-L-homocysteine + H(+). Specifically methylates the ribose of guanosine 2251 in 23S rRNA. The polypeptide is 23S rRNA (guanosine-2'-O-)-methyltransferase RlmB (Pseudomonas syringae pv. tomato (strain ATCC BAA-871 / DC3000)).